The following is a 186-amino-acid chain: dCTP deaminase (186 aa).

107 to 112 (KSTYAR) is a binding site for dCTP. The active-site Proton donor/acceptor is Glu-133. 3 residues coordinate dCTP: Gln-152, Tyr-166, and Gln-176.

The protein belongs to the dCTP deaminase family. Homotrimer.

The catalysed reaction is dCTP + H2O + H(+) = dUTP + NH4(+). It participates in pyrimidine metabolism; dUMP biosynthesis; dUMP from dCTP (dUTP route): step 1/2. Its function is as follows. Catalyzes the deamination of dCTP to dUTP. The protein is dCTP deaminase of Campylobacter jejuni subsp. jejuni serotype O:2 (strain ATCC 700819 / NCTC 11168).